The following is a 310-amino-acid chain: ADP-L-glycero-D-manno-heptose-6-epimerase (310 aa).

NADP(+)-binding positions include 10 to 11, 31 to 32, K38, K53, 75 to 79, and N92; these read FI, DN, and EGACS. Y140 (proton acceptor) is an active-site residue. K144 provides a ligand contact to NADP(+). N169 is a binding site for substrate. Positions 170 and 178 each coordinate NADP(+). K178 functions as the Proton acceptor in the catalytic mechanism. Residues S180, H187, 201–204, R209, and Y272 contribute to the substrate site; that span reads FEGS.

The protein belongs to the NAD(P)-dependent epimerase/dehydratase family. HldD subfamily. Homopentamer. Requires NADP(+) as cofactor.

It catalyses the reaction ADP-D-glycero-beta-D-manno-heptose = ADP-L-glycero-beta-D-manno-heptose. It functions in the pathway nucleotide-sugar biosynthesis; ADP-L-glycero-beta-D-manno-heptose biosynthesis; ADP-L-glycero-beta-D-manno-heptose from D-glycero-beta-D-manno-heptose 7-phosphate: step 4/4. It participates in bacterial outer membrane biogenesis; LPS core biosynthesis. Catalyzes the interconversion between ADP-D-glycero-beta-D-manno-heptose and ADP-L-glycero-beta-D-manno-heptose via an epimerization at carbon 6 of the heptose. The protein is ADP-L-glycero-D-manno-heptose-6-epimerase of Klebsiella pneumoniae.